A 498-amino-acid chain; its full sequence is Tumor necrosis factor receptor superfamily member 8 (498 aa).

The N-terminal stretch at 1 to 18 is a signal peptide; that stretch reads MSALLTAAGLLFLGMLQA. At 19–287 the chain is on the extracellular side; the sequence is FPTDRPLKTT…STGTPFLDPG (269 aa). TNFR-Cys repeat units follow at residues 68 to 105 and 106 to 146; these read QCAPDYYVNEDGKCTACVTCLPGLVEKAPCSGNSPRIC and ECQP…DTIC. 5 disulfide bridges follow: Cys-69/Cys-81, Cys-84/Cys-97, Cys-87/Cys-105, Cys-107/Cys-121, and Cys-128/Cys-146. The tract at residues 142 to 168 is disordered; sequence KDTICELPSSGSGPNCSNPGDRKTLTS. Over residues 149-160 the composition is skewed to low complexity; sequence PSSGSGPNCSNP. Residues Asn-156, Asn-183, and Asn-229 are each glycosylated (N-linked (GlcNAc...) asparagine). Residues 204–256 form a disordered region; it reads ELVKVPESSSSKAREPSPDPGNAEKNMTLELPSPGTLPDISTSENSKEPASTA. Over residues 242–256 the composition is skewed to polar residues; that stretch reads DISTSENSKEPASTA. The chain crosses the membrane as a helical span at residues 288 to 308; it reads PVLFWVAMVVLLVGSGSFLLC. Residues 309-498 are Cytoplasmic-facing; the sequence is YWKACRRRFQ…DHGPTTVSEK (190 aa). The segment covering 338 to 358 has biased composition (polar residues); the sequence is DSCPTEKLTQPQRSGSVTDPS. Disordered stretches follow at residues 338–370, 389–411, and 436–498; these read DSCPTEKLTQPQRSGSVTDPSTGHKLSPVSPPP, LDDSPAGNPFSPREPPEPRVSTE, and EVPE…VSEK. Residues Ser-339 and Ser-353 each carry the phosphoserine modification. Basic and acidic residues-rich tracts occupy residues 402-411, 456-465, and 484-498; these read EPPEPRVSTE, EVDHAPHYPE, and EGGKEDHGPTTVSEK.

It belongs to the TNFR8 family. In terms of assembly, interacts with TRAF1, TRAF2, TRAF3 and TRAF5. As to expression, detected in thymus and in activated splenocytes.

Its subcellular location is the cell membrane. In terms of biological role, receptor for TNFSF8/CD30L. May play a role in the regulation of cellular growth and transformation of activated lymphoblasts. Regulates gene expression through activation of NF-kappa-B. In Mus musculus (Mouse), this protein is Tumor necrosis factor receptor superfamily member 8.